Consider the following 382-residue polypeptide: 1-deoxy-D-xylulose 5-phosphate reductoisomerase (382 aa).

NADPH is bound by residues serine 10, glycine 11, serine 12, isoleucine 13, glycine 36, lysine 37, asparagine 38, and asparagine 121. Lysine 122 serves as a coordination point for 1-deoxy-D-xylulose 5-phosphate. An NADPH-binding site is contributed by glutamate 123. Residue aspartate 147 coordinates Mn(2+). Residues serine 148, glutamate 149, serine 173, and histidine 196 each contribute to the 1-deoxy-D-xylulose 5-phosphate site. Glutamate 149 is a Mn(2+) binding site. Glycine 202 contributes to the NADPH binding site. Positions 209, 214, 215, and 218 each coordinate 1-deoxy-D-xylulose 5-phosphate. Glutamate 218 is a binding site for Mn(2+).

Belongs to the DXR family. Mg(2+) is required as a cofactor. The cofactor is Mn(2+).

The enzyme catalyses 2-C-methyl-D-erythritol 4-phosphate + NADP(+) = 1-deoxy-D-xylulose 5-phosphate + NADPH + H(+). The protein operates within isoprenoid biosynthesis; isopentenyl diphosphate biosynthesis via DXP pathway; isopentenyl diphosphate from 1-deoxy-D-xylulose 5-phosphate: step 1/6. Functionally, catalyzes the NADPH-dependent rearrangement and reduction of 1-deoxy-D-xylulose-5-phosphate (DXP) to 2-C-methyl-D-erythritol 4-phosphate (MEP). The sequence is that of 1-deoxy-D-xylulose 5-phosphate reductoisomerase from Geobacillus kaustophilus (strain HTA426).